The chain runs to 84 residues: Large ribosomal subunit protein bL27 (84 aa).

Positions 1–20 are disordered; that stretch reads MAHKKAGGSTRNGRDSHSKR.

The protein belongs to the bacterial ribosomal protein bL27 family.

This is Large ribosomal subunit protein bL27 from Blochmanniella pennsylvanica (strain BPEN).